The following is a 398-amino-acid chain: Abhydrolase domain-containing protein 2 (398 aa).

Residues 1–4 (MSTA) are Cytoplasmic-facing. A helical; Signal-anchor for type II membrane protein membrane pass occupies residues 5-22 (FLTLIAVIVCILFRILNV). The Extracellular segment spans residues 23-398 (HSQPLKPSVW…MMHEVGKVAP (376 aa)). Residues 113–365 (VAICPGIANS…HGGHLGFYEG (253 aa)) form the AB hydrolase-1 domain. Residues Ser192, Asp328, and His359 each act as charge relay system in the active site.

It belongs to the AB hydrolase superfamily. AB hydrolase 4 family.

The protein localises to the membrane. This chain is Abhydrolase domain-containing protein 2 (Hydr2), found in Drosophila melanogaster (Fruit fly).